The chain runs to 430 residues: MQASIESTGNLERRLTFTLPQERLETHVGGRLRELARTTRIKGFRPGKVPTKVIEQRFGQQVRAEAMEGLLRETFDSAVREHSLRLAGNPRIDQGETDFDFVATFEVVPDFGDIDVTKLSVVRATAEVTDADIDQMIENLRLQRRTWNPVERGAQVGDLVALETWSQAGDERLPAEGVETGSSVLGSGVMFDQIEKGLEGLTKGEEKTLTVDFPAEWRVPQLAGKTVQVHVKAVEVSEPVLPAVDKEFIKSFGVKSGDAEQFRADIRTNLERELKGALMNRLRREVGEQLIAAYAHVEMPPRLVENEARSMLAQQVEQVRRSGRDPGQVPADAHQGFMDAAAKRVLVGLLVGEVARRNELRLESKRVSETLRLIASTYEEPEQVIEMYRNDPQLMNGLQSRVMEEQVIDWIAERAQHTEQSLSFQDAIRV.

Residues 157–242 (GDLVALETWS…AVEVSEPVLP (86 aa)) form the PPIase FKBP-type domain.

Belongs to the FKBP-type PPIase family. Tig subfamily.

The protein localises to the cytoplasm. It carries out the reaction [protein]-peptidylproline (omega=180) = [protein]-peptidylproline (omega=0). Its function is as follows. Involved in protein export. Acts as a chaperone by maintaining the newly synthesized protein in an open conformation. Functions as a peptidyl-prolyl cis-trans isomerase. The sequence is that of Trigger factor from Xanthomonas euvesicatoria pv. vesicatoria (strain 85-10) (Xanthomonas campestris pv. vesicatoria).